The primary structure comprises 247 residues: UPF0246 protein LAF_1150 (247 aa).

It belongs to the UPF0246 family.

The protein is UPF0246 protein LAF_1150 of Limosilactobacillus fermentum (strain NBRC 3956 / LMG 18251) (Lactobacillus fermentum).